A 195-amino-acid polypeptide reads, in one-letter code: Obelin (195 aa).

Positions 1–6 are excised as a propeptide; the sequence is MASKYA. EF-hand domains follow at residues 17–52, 53–88, 110–145, and 146–181; these read KWIK…DICK, NLGA…FPEF, LIRE…SGIS, and PSEE…FWYT. The Ca(2+) site is built by Asp-30, Asn-32, Asn-34, Gln-36, and Glu-41. The Ca(2+) site is built by Asp-123, Asp-125, Ser-127, Thr-129, Glu-134, Asp-159, Asp-161, Ser-163, Glu-165, and Glu-170.

This sequence belongs to the aequorin family.

Ca(2+)-dependent bioluminescence photoprotein. Displays an emission peak at 495 nm (blue light). Trace amounts of calcium ion trigger the intramolecular oxidation of the chromophore, coelenterazine into coelenteramide and CO(2) with the concomitant emission of light. This chain is Obelin, found in Obelia geniculata (Knotted thread hydroid).